Consider the following 289-residue polypeptide: Myoblast determination protein 1 homolog A (289 aa).

One can recognise a bHLH domain in the interval 95 to 146; that stretch reads DRRKAATMRERRRLSKVNEAFETLKRYTSTNPNQRLPKVEILRNAIRYIESL. Residues 165–212 are disordered; it reads SGDSDASSPRSNCSDGMMDYNSPPCGSRRRNSYDSSFYSDSPNDSRLG. Composition is skewed to polar residues over residues 168–178 and 197–208; these read SDASSPRSNCS and YDSSFYSDSPND.

As to quaternary structure, efficient DNA binding requires dimerization with another bHLH protein.

Its subcellular location is the nucleus. In terms of biological role, may act as a transcriptional activator that promotes transcription of muscle-specific target genes and plays a role in muscle differentiation. This Xenopus laevis (African clawed frog) protein is Myoblast determination protein 1 homolog A (myod1-a).